A 333-amino-acid chain; its full sequence is DNA-directed RNA polymerase subunit alpha (333 aa).

Positions 1 to 235 are alpha N-terminal domain (alpha-NTD); that stretch reads MQTNLLKPKA…EQLAVFAQLE (235 aa). Residues 253–333 are alpha C-terminal domain (alpha-CTD); it reads FDPILLRPVD…NWPPQGLDKR (81 aa).

Belongs to the RNA polymerase alpha chain family. As to quaternary structure, homodimer. The RNAP catalytic core consists of 2 alpha, 1 beta, 1 beta' and 1 omega subunit. When a sigma factor is associated with the core the holoenzyme is formed, which can initiate transcription.

It carries out the reaction RNA(n) + a ribonucleoside 5'-triphosphate = RNA(n+1) + diphosphate. In terms of biological role, DNA-dependent RNA polymerase catalyzes the transcription of DNA into RNA using the four ribonucleoside triphosphates as substrates. The protein is DNA-directed RNA polymerase subunit alpha of Methylibium petroleiphilum (strain ATCC BAA-1232 / LMG 22953 / PM1).